We begin with the raw amino-acid sequence, 747 residues long: Ion-translocating oxidoreductase complex subunit C (747 aa).

2 consecutive 4Fe-4S ferredoxin-type domains span residues 368-397 (MEPV…QQLY) and 407-436 (KARN…VQYY). Residues cysteine 377, cysteine 380, cysteine 383, cysteine 387, cysteine 416, cysteine 419, cysteine 422, and cysteine 426 each coordinate [4Fe-4S] cluster. Residues 538–564 (VREERARENQTQQETPTVDVPSTELDD) are disordered.

This sequence belongs to the 4Fe4S bacterial-type ferredoxin family. RnfC subfamily. As to quaternary structure, the complex is composed of six subunits: RnfA, RnfB, RnfC, RnfD, RnfE and RnfG. The cofactor is [4Fe-4S] cluster.

It is found in the cell inner membrane. Functionally, part of a membrane-bound complex that couples electron transfer with translocation of ions across the membrane. The sequence is that of Ion-translocating oxidoreductase complex subunit C from Pectobacterium carotovorum subsp. carotovorum (strain PC1).